The primary structure comprises 136 residues: Small ribosomal subunit protein uS11c (136 aa).

Residues 1–22 (MAKAIPKKGSRGRIGSRKSTRK) are disordered.

This sequence belongs to the universal ribosomal protein uS11 family. In terms of assembly, part of the 30S ribosomal subunit.

The protein resides in the plastid. The protein localises to the chloroplast. The protein is Small ribosomal subunit protein uS11c of Lactuca sativa (Garden lettuce).